Reading from the N-terminus, the 127-residue chain is Large ribosomal subunit protein bL12 (127 aa).

Belongs to the bacterial ribosomal protein bL12 family. As to quaternary structure, homodimer. Part of the ribosomal stalk of the 50S ribosomal subunit. Forms a multimeric L10(L12)X complex, where L10 forms an elongated spine to which 2 to 4 L12 dimers bind in a sequential fashion. Binds GTP-bound translation factors.

Functionally, forms part of the ribosomal stalk which helps the ribosome interact with GTP-bound translation factors. Is thus essential for accurate translation. The polypeptide is Large ribosomal subunit protein bL12 (Clavibacter michiganensis subsp. michiganensis (strain NCPPB 382)).